A 186-amino-acid polypeptide reads, in one-letter code: Glutathione peroxidase 7 (186 aa).

A signal peptide spans 1-18; the sequence is MVAARAAAWLLLAAAACA. Cysteine 56 is an active-site residue.

This sequence belongs to the glutathione peroxidase family.

It localises to the secreted. It carries out the reaction 2 glutathione + H2O2 = glutathione disulfide + 2 H2O. In Bos taurus (Bovine), this protein is Glutathione peroxidase 7 (GPX7).